The chain runs to 333 residues: Holliday junction branch migration complex subunit RuvB (333 aa).

The segment at 1-182 is large ATPase domain (RuvB-L); that stretch reads MDERLLSQSH…FGVTLKLEYY (182 aa). ATP contacts are provided by residues L21, R22, G63, K66, T67, T68, 129 to 131, R172, Y182, and R219; that span reads EDY. T67 lines the Mg(2+) pocket. Positions 183 to 253 are small ATPAse domain (RuvB-S); sequence ETHELAAIVS…LASDALDRLH (71 aa). The head domain (RuvB-H) stretch occupies residues 256–333; sequence ALGLDEVDHR…SHFGYEEEEE (78 aa). Residues R311 and R316 each contribute to the DNA site.

This sequence belongs to the RuvB family. Homohexamer. Forms an RuvA(8)-RuvB(12)-Holliday junction (HJ) complex. HJ DNA is sandwiched between 2 RuvA tetramers; dsDNA enters through RuvA and exits via RuvB. An RuvB hexamer assembles on each DNA strand where it exits the tetramer. Each RuvB hexamer is contacted by two RuvA subunits (via domain III) on 2 adjacent RuvB subunits; this complex drives branch migration. In the full resolvosome a probable DNA-RuvA(4)-RuvB(12)-RuvC(2) complex forms which resolves the HJ.

The protein localises to the cytoplasm. It carries out the reaction ATP + H2O = ADP + phosphate + H(+). In terms of biological role, the RuvA-RuvB-RuvC complex processes Holliday junction (HJ) DNA during genetic recombination and DNA repair, while the RuvA-RuvB complex plays an important role in the rescue of blocked DNA replication forks via replication fork reversal (RFR). RuvA specifically binds to HJ cruciform DNA, conferring on it an open structure. The RuvB hexamer acts as an ATP-dependent pump, pulling dsDNA into and through the RuvAB complex. RuvB forms 2 homohexamers on either side of HJ DNA bound by 1 or 2 RuvA tetramers; 4 subunits per hexamer contact DNA at a time. Coordinated motions by a converter formed by DNA-disengaged RuvB subunits stimulates ATP hydrolysis and nucleotide exchange. Immobilization of the converter enables RuvB to convert the ATP-contained energy into a lever motion, pulling 2 nucleotides of DNA out of the RuvA tetramer per ATP hydrolyzed, thus driving DNA branch migration. The RuvB motors rotate together with the DNA substrate, which together with the progressing nucleotide cycle form the mechanistic basis for DNA recombination by continuous HJ branch migration. Branch migration allows RuvC to scan DNA until it finds its consensus sequence, where it cleaves and resolves cruciform DNA. In Exiguobacterium sp. (strain ATCC BAA-1283 / AT1b), this protein is Holliday junction branch migration complex subunit RuvB.